The primary structure comprises 503 residues: MSEQQNAELDFHGEMAVRREKLAALRAKGNAFPNTFRRDALAQDLHNQYDETDGEQLKEKDLHVAVAGRIMTRRTMGKATFITIQDMSGKIQLYVARDNLPEGVYGEDVKSWDLGDIVGIKGTLFKTKTNELTVKAHEVQLLTKALRPLPDKFHGLSDQETRYRQRYLDLISNEESRRTFVIRSKVIAGIREYFIGKGFIEVETPMLQVIPGGAAARPFVTHHNALDIDMYLRIAPELYLKRLVVGGFERVFELNRNFRNEGVSVRHNPEFTMIEYYQAYADYHDLMDNTEELLRKLALDILGTTIVPYGEYEFDFGKPFERITMHDAVIKYGAEKGIVKEDLYDLDRAKAAAAKLGIEIQKSWGLGSIVNAIFEEVAEHHLIQPTFLMAHPAEISPLARRNDENPEVTDRFELFIGGREIGNGFSELNDAEDQAERFDAQVAAKDAGDDEAMFKDDDFVTALEHGLPPTAGEGLGIDRLAMLFANAPSIRDVILFPAMKHKG.

Residues E413 and E420 each contribute to the Mg(2+) site.

It belongs to the class-II aminoacyl-tRNA synthetase family. Homodimer. It depends on Mg(2+) as a cofactor.

It localises to the cytoplasm. It carries out the reaction tRNA(Lys) + L-lysine + ATP = L-lysyl-tRNA(Lys) + AMP + diphosphate. The protein is Lysine--tRNA ligase of Mannheimia succiniciproducens (strain KCTC 0769BP / MBEL55E).